The chain runs to 336 residues: Aspartate--ammonia ligase (336 aa).

Belongs to the class-II aminoacyl-tRNA synthetase family. AsnA subfamily.

It is found in the cytoplasm. The catalysed reaction is L-aspartate + NH4(+) + ATP = L-asparagine + AMP + diphosphate + H(+). The protein operates within amino-acid biosynthesis; L-asparagine biosynthesis; L-asparagine from L-aspartate (ammonia route): step 1/1. The polypeptide is Aspartate--ammonia ligase (Lactobacillus johnsonii (strain CNCM I-12250 / La1 / NCC 533)).